A 277-amino-acid chain; its full sequence is General transcription factor IIF subunit 2 (277 aa).

It belongs to the TFIIF beta subunit family. Heterodimer of an alpha and a beta subunit.

Its subcellular location is the nucleus. Functionally, TFIIF is a general transcription initiation factor that binds to RNA polymerase II and helps to recruit it to the initiation complex in collaboration with TFIIB. This chain is General transcription factor IIF subunit 2 (TfIIFbeta), found in Drosophila melanogaster (Fruit fly).